The following is an 884-amino-acid chain: Putative GTP diphosphokinase RSH1, chloroplastic (884 aa).

The N-terminal 55 residues, 1-55 (MTSASSMSVSVECVNICNLTKGDGNARSDCSALSCAWKAPRALTGFLASTAHPPV), are a transit peptide targeting the chloroplast. The HD domain maps to 172–279 (FIIHPVAVAR…VKLADRLHNM (108 aa)). Residues 563–626 (LGSRVFVFTP…ENAEVVEIVT (64 aa)) enclose the TGS domain. Residues 711–727 (QSQDKSRDTTPAPQNGS) show a composition bias toward polar residues. Positions 711 to 747 (QSQDKSRDTTPAPQNGSVWAPKVNGKHNKAIKNSSSD) are disordered. Residues 797–868 (WLCVVSMDRK…LVLGVLGWSS (72 aa)) form the ACT domain.

It belongs to the RelA/SpoT family. As to quaternary structure, interacts with RPP4. Interacts with RPP5. In terms of tissue distribution, expressed in hypocotyls, shoots, cotyledons, rosette leaves, sepals and pistils.

It is found in the plastid. The protein resides in the chloroplast. The catalysed reaction is GTP + ATP = guanosine 3'-diphosphate 5'-triphosphate + AMP. Functionally, may be involved in a rapid plant ppGpp (guanosine 3'-diphosphate 5'-diphosphate)-mediated response to pathogens and other stresses. Unable to functionally complement E.coli relA mutants. The chain is Putative GTP diphosphokinase RSH1, chloroplastic (RSH1) from Arabidopsis thaliana (Mouse-ear cress).